The following is a 493-amino-acid chain: Glutamyl-tRNA(Gln) amidotransferase subunit A (493 aa).

Active-site charge relay system residues include Lys78 and Ser158. Ser182 (acyl-ester intermediate) is an active-site residue.

The protein belongs to the amidase family. GatA subfamily. As to quaternary structure, heterotrimer of A, B and C subunits.

The enzyme catalyses L-glutamyl-tRNA(Gln) + L-glutamine + ATP + H2O = L-glutaminyl-tRNA(Gln) + L-glutamate + ADP + phosphate + H(+). Its function is as follows. Allows the formation of correctly charged Gln-tRNA(Gln) through the transamidation of misacylated Glu-tRNA(Gln) in organisms which lack glutaminyl-tRNA synthetase. The reaction takes place in the presence of glutamine and ATP through an activated gamma-phospho-Glu-tRNA(Gln). This Methylorubrum extorquens (strain CM4 / NCIMB 13688) (Methylobacterium extorquens) protein is Glutamyl-tRNA(Gln) amidotransferase subunit A.